The chain runs to 223 residues: Probable amino-acid ABC transporter permease protein PatM (223 aa).

The region spanning Leu-19–Gln-210 is the ABC transmembrane type-1 domain. A run of 5 helical transmembrane segments spans residues Met-23–Ile-43, Ile-59–Leu-78, Ala-90–Ile-110, Phe-156–Ala-176, and Phe-186–Leu-206.

It belongs to the binding-protein-dependent transport system permease family. HisMQ subfamily.

Its subcellular location is the cell inner membrane. Functionally, probably part of a binding-protein-dependent transport system for an amino acid. Probably responsible for the translocation of the substrate across the membrane. The polypeptide is Probable amino-acid ABC transporter permease protein PatM (patM) (Vibrio harveyi (Beneckea harveyi)).